Here is a 20-residue protein sequence, read N- to C-terminus: 39 kDa major outer membrane protein (20 aa).

It is found in the cell outer membrane. The chain is 39 kDa major outer membrane protein from Aggregatibacter actinomycetemcomitans (Actinobacillus actinomycetemcomitans).